A 506-amino-acid chain; its full sequence is Maturase K (506 aa).

It belongs to the intron maturase 2 family. MatK subfamily.

Its subcellular location is the plastid. It localises to the chloroplast. Functionally, usually encoded in the trnK tRNA gene intron. Probably assists in splicing its own and other chloroplast group II introns. This is Maturase K from Phyllodoce empetriformis (Pink mountainheath).